A 105-amino-acid polypeptide reads, in one-letter code: UPF0473 protein SAG2089 (105 aa).

It belongs to the UPF0473 family.

The polypeptide is UPF0473 protein SAG2089 (Streptococcus agalactiae serotype V (strain ATCC BAA-611 / 2603 V/R)).